The sequence spans 124 residues: Pal-related lipoprotein (124 aa).

The signal sequence occupies residues 1–18 (MRYRAVFPMLIIVFALSG). The N-palmitoyl cysteine moiety is linked to residue Cys-19. Cys-19 carries S-diacylglycerol cysteine lipidation.

It is found in the cell membrane. This is Pal-related lipoprotein (slp) from Bacillus subtilis (strain 168).